The following is a 280-amino-acid chain: Ribosomal RNA small subunit methyltransferase A (280 aa).

S-adenosyl-L-methionine contacts are provided by H13, L15, G40, E61, D85, and N106. The disordered stretch occupies residues 258–280 (RPPADVEDANAPHTEQGKGDNSQ).

Belongs to the class I-like SAM-binding methyltransferase superfamily. rRNA adenine N(6)-methyltransferase family. RsmA subfamily.

It localises to the cytoplasm. It catalyses the reaction adenosine(1518)/adenosine(1519) in 16S rRNA + 4 S-adenosyl-L-methionine = N(6)-dimethyladenosine(1518)/N(6)-dimethyladenosine(1519) in 16S rRNA + 4 S-adenosyl-L-homocysteine + 4 H(+). Its function is as follows. Specifically dimethylates two adjacent adenosines (A1518 and A1519) in the loop of a conserved hairpin near the 3'-end of 16S rRNA in the 30S particle. May play a critical role in biogenesis of 30S subunits. This chain is Ribosomal RNA small subunit methyltransferase A, found in Alcanivorax borkumensis (strain ATCC 700651 / DSM 11573 / NCIMB 13689 / SK2).